Here is a 183-residue protein sequence, read N- to C-terminus: UPF0316 protein GTNG_0803 (183 aa).

3 helical membrane-spanning segments follow: residues 5–25, 33–53, and 59–79; these read IVLVLALQLVYVPILTLRTIF, LAAFMGFLEALIYVFGLSIVF, and YIVMIVYAAGFGARGFLLEDI.

This sequence belongs to the UPF0316 family.

Its subcellular location is the cell membrane. The protein is UPF0316 protein GTNG_0803 of Geobacillus thermodenitrificans (strain NG80-2).